Reading from the N-terminus, the 254-residue chain is Aspartate/glutamate leucyltransferase (254 aa).

The protein belongs to the R-transferase family. Bpt subfamily.

The protein localises to the cytoplasm. It carries out the reaction N-terminal L-glutamyl-[protein] + L-leucyl-tRNA(Leu) = N-terminal L-leucyl-L-glutamyl-[protein] + tRNA(Leu) + H(+). The enzyme catalyses N-terminal L-aspartyl-[protein] + L-leucyl-tRNA(Leu) = N-terminal L-leucyl-L-aspartyl-[protein] + tRNA(Leu) + H(+). Functions in the N-end rule pathway of protein degradation where it conjugates Leu from its aminoacyl-tRNA to the N-termini of proteins containing an N-terminal aspartate or glutamate. The protein is Aspartate/glutamate leucyltransferase of Xylella fastidiosa (strain 9a5c).